The chain runs to 300 residues: tRNA pseudouridine synthase B (300 aa).

Catalysis depends on D47, which acts as the Nucleophile.

This sequence belongs to the pseudouridine synthase TruB family. Type 1 subfamily.

The catalysed reaction is uridine(55) in tRNA = pseudouridine(55) in tRNA. In terms of biological role, responsible for synthesis of pseudouridine from uracil-55 in the psi GC loop of transfer RNAs. This is tRNA pseudouridine synthase B from Azoarcus sp. (strain BH72).